We begin with the raw amino-acid sequence, 361 residues long: Arginine N(omega)-methyltransferase (361 aa).

Basic and acidic residues predominate over residues 1 to 17; that stretch reads MRHVQEARAVPAEHEAR. Residues 1 to 24 form a disordered region; sequence MRHVQEARAVPAEHEARPAPVTMP. Residues 65-361 form the SAM-dependent MTase PRMT-type domain; that stretch reads DADAFAQIAR…WSDFTLRVSI (297 aa).

The protein belongs to the class I-like SAM-binding methyltransferase superfamily. Protein arginine N-methyltransferase family.

It carries out the reaction L-arginine + S-adenosyl-L-methionine = N(omega)-methyl-L-arginine + S-adenosyl-L-homocysteine + H(+). It participates in antibiotic biosynthesis. Its function is as follows. Involved in the biosynthesis of the glucosamine-nitrosourea antibiotic streptozotocin (SZN). Catalyzes the conversion of L-arginine to N(omega)-methyl-L-arginine (L-NMA), using S-adenosyl-L-methionine (SAM) as a methyl donor. The polypeptide is Arginine N(omega)-methyltransferase (Streptomyces achromogenes subsp. streptozoticus).